Here is a 317-residue protein sequence, read N- to C-terminus: Hydroxyacyl-CoA dehydrogenase ChsB1 (317 aa).

NAD(+) contacts are provided by leucine 32, aspartate 51, aspartate 82, isoleucine 83, asparagine 108, serine 168, tyrosine 181, lysine 185, and threonine 215. Active-site residues include serine 168, tyrosine 181, and lysine 185.

The protein belongs to the short-chain dehydrogenases/reductases (SDR) family. Homodimer, with 1 active site on each face.

The catalysed reaction is (22S)-hydroxy-3-oxo-chol-4-ene-24-oyl-CoA + NAD(+) = 3,22-dioxochol-4-en-24-oyl-CoA + NADH + H(+). It participates in steroid metabolism; cholesterol degradation. Functionally, a reversible dehydrogenase involved in cholesterol side-chain degradation. Catalyzes the oxidation of hydroxyl-cholesterol-CoA ester metabolic intermediate (22S)-HOCO-CoA (3-oxo-chol-4-ene-(22S)-hydroxy-24-oyl-CoA), the product of ChsH3, has no activity on (22R)-HOCO-CoA (the product of EchA19). Also acts on (3R)-hydroxyoctanoyl-CoA and 17-beta-hydroxyandrost-4-en-3-one, but not on 7-alpha-hydroxyandrost-4-en-3-one, uses NAD(+) but not NADP(+). The sequence is that of Hydroxyacyl-CoA dehydrogenase ChsB1 from Mycobacterium tuberculosis (strain ATCC 25618 / H37Rv).